The sequence spans 624 residues: Multicopper oxidase elcG (624 aa).

The signal sequence occupies residues 1 to 18; sequence MACNILNFLTGLLSLSST. 2 consecutive Plastocyanin-like domains span residues 48–160 and 216–373; these read PGRA…IERG and CMDA…TIRI. Asparagine 65 carries N-linked (GlcNAc...) asparagine glycosylation. 4 residues coordinate Cu cation: histidine 96, histidine 98, histidine 140, and histidine 142. Asparagine 271, asparagine 296, and asparagine 464 each carry an N-linked (GlcNAc...) asparagine glycan. Positions 474-603 constitute a Plastocyanin-like 3 domain; that stretch reads FLFQDPSQIE…GGMGVVILDG (130 aa). 7 residues coordinate Cu cation: histidine 511, histidine 514, histidine 516, histidine 585, cysteine 586, histidine 587, and histidine 591.

This sequence belongs to the multicopper oxidase family.

The protein operates within secondary metabolite biosynthesis. Functionally, multicopper oxidase; part of the gene cluster that mediates the biosynthesis of elsinochrome C, a perelyenequinone phytotoxin structurally similar to cercosporin. The first step of elsinochrome C biosynthesis is performed by the polyketide synthase elcA which catalyzes the formation of nor-toralactone. The starter unit acyltransferase (SAT) domain of elcA initiates polyketide extension by the selective utilization of acetyl-CoA, which is elongated to the heptaketide in the beta-ketoacyl synthase (KS) domain by successive condensations with six malonyl units introduced by the malonyl acyltransferase (MAT) domain. The product template (PT) domain catalyzes C4-C9 and C2-C11 aldol cyclizations and dehydrations to a trihydroxynaphthalene, which is thought to be delivered to the thioesterase (TE) domain for product release. The bifunctional enzyme elcB then methylates nor-toralactone to toralactone before conducting an unusual oxidative aromatic ring opening. The next step in perylenequinone biosynthesis is an O-methylation at the nascent OH-6 of the elcB product performed by the O-methyltransferase elcD. The oxidative coupling of the two monomeric naphthol units in perylenequinone biosynthesis is catalyzed by the FAD-dependent monooxygenase elcE and the multicopper oxidase elcG. ElcG might catalyze the first intermolecular coupling in a regio- and stereo-selective manner via a phenol radical coupling mechanism and the elcE could forge the second C-C bond intramolecularly via a hydride transfer mechanism. The fasciclin domain-containing protein elcF might also play a role duting this step. The last piece of the puzzle in the biosynthesis of elsinochrome C is the additional annulation by enolate coupling to afford the dihydrobenzo(ghi)perylenequinone system, catalyzed by the FAD-dependent monooxygenase elcH. In Phaeosphaeria nodorum (strain SN15 / ATCC MYA-4574 / FGSC 10173) (Glume blotch fungus), this protein is Multicopper oxidase elcG.